Consider the following 390-residue polypeptide: GTPase Obg (390 aa).

The Obg domain occupies 1 to 159 (MKFVDEATIK…RELRLELLLL (159 aa)). Residues 160-333 (ADVGMLGLPN…LCDELADFMD (174 aa)) enclose the OBG-type G domain. GTP-binding positions include 166 to 173 (GLPNAGKS), 191 to 195 (FTTLI), 213 to 216 (DIPG), 283 to 286 (NKTD), and 314 to 316 (AAV). Mg(2+) is bound by residues serine 173 and threonine 193.

It belongs to the TRAFAC class OBG-HflX-like GTPase superfamily. OBG GTPase family. As to quaternary structure, monomer. Mg(2+) is required as a cofactor.

It localises to the cytoplasm. Its function is as follows. An essential GTPase which binds GTP, GDP and possibly (p)ppGpp with moderate affinity, with high nucleotide exchange rates and a fairly low GTP hydrolysis rate. Plays a role in control of the cell cycle, stress response, ribosome biogenesis and in those bacteria that undergo differentiation, in morphogenesis control. The chain is GTPase Obg from Aliivibrio fischeri (strain ATCC 700601 / ES114) (Vibrio fischeri).